A 132-amino-acid polypeptide reads, in one-letter code: NADPH-dependent 7-cyano-7-deazaguanine reductase (132 aa).

Residue C43 is the Thioimide intermediate of the active site. D50 acts as the Proton donor in catalysis. Substrate-binding positions include 65-67 (VEL) and 84-85 (HE).

This sequence belongs to the GTP cyclohydrolase I family. QueF type 1 subfamily.

Its subcellular location is the cytoplasm. It catalyses the reaction 7-aminomethyl-7-carbaguanine + 2 NADP(+) = 7-cyano-7-deazaguanine + 2 NADPH + 3 H(+). Its pathway is tRNA modification; tRNA-queuosine biosynthesis. Catalyzes the NADPH-dependent reduction of 7-cyano-7-deazaguanine (preQ0) to 7-aminomethyl-7-deazaguanine (preQ1). The sequence is that of NADPH-dependent 7-cyano-7-deazaguanine reductase from Thermosynechococcus vestitus (strain NIES-2133 / IAM M-273 / BP-1).